A 286-amino-acid polypeptide reads, in one-letter code: Phospholipase A1 (286 aa).

A signal peptide spans 1–20; the sequence is MRISLACLAALCALPAGVMA. Residues 21-49 are Periplasmic-facing; that stretch reads QDASVHDKPAVRGSIIANLLQDHDNPFLL. The chain crosses the membrane as a beta stranded span at residues 50–62; sequence YPYESNYLLYTWT. Topologically, residues 63-81 are extracellular; sequence SDLNKEAIRSYDWAENARK. Residues 82 to 96 form a beta stranded membrane-spanning segment; that stretch reads DEVKFQLSLAFPLWR. Topologically, residues 97–102 are periplasmic; that stretch reads GILGDN. The chain crosses the membrane as a beta stranded span at residues 103–115; that stretch reads SLLGASYTQKSWW. Residues 116-125 are Extracellular-facing; that stretch reads QLSNSKESAP. Ser123 is a Ca(2+) binding site. The beta stranded transmembrane segment at 126–145 threads the bilayer; the sequence is FRETNYEPQLFLGFATDYQF. Over 146–147 the chain is Periplasmic; that stretch reads AG. Residues 148–161 traverse the membrane as a beta stranded segment; sequence WTLRDIEMGYNHDS. The Proton acceptor role is filled by His159. Ser161 acts as the Nucleophile in catalysis. The Extracellular portion of the chain corresponds to 162–170; the sequence is NGRSDPTSR. Arg164 and Ser169 together coordinate Ca(2+). The chain crosses the membrane as a beta stranded span at residues 171–183; the sequence is SWNRLYARLMAQN. At 184 to 185 the chain is on the periplasmic side; sequence GN. The beta stranded transmembrane segment at 186–195 threads the bilayer; that stretch reads WLVEVKPWYV. The Extracellular segment spans residues 196–213; sequence VGSTDDNPDITKYMGYYR. Residue Asp201 participates in Ca(2+) binding. A beta stranded transmembrane segment spans residues 214–220; the sequence is LKVGYQL. Residues 221-222 are Periplasmic-facing; the sequence is GE. Residues 223–231 form a beta stranded membrane-spanning segment; it reads AILSAQGQY. Residues 232-238 are Extracellular-facing; sequence NWNTGYG. The beta stranded transmembrane segment at 239–247 threads the bilayer; it reads GAELGVSYP. Over 248–252 the chain is Periplasmic; the sequence is ITKHV. Residues 253–262 traverse the membrane as a beta stranded segment; the sequence is RAYTQIYSGY. The Extracellular portion of the chain corresponds to 263–271; the sequence is GESLIDYNF. Residues 272–283 form a beta stranded membrane-spanning segment; sequence NQTRVGVGLMLN. Residues 284–286 are Periplasmic-facing; that stretch reads DLF.

Belongs to the phospholipase A1 family. As to quaternary structure, homodimer; dimerization is reversible, and the dimeric form is the active one. Ca(2+) serves as cofactor.

Its subcellular location is the cell outer membrane. The catalysed reaction is a 1,2-diacyl-sn-glycero-3-phosphocholine + H2O = a 2-acyl-sn-glycero-3-phosphocholine + a fatty acid + H(+). It catalyses the reaction a 1,2-diacyl-sn-glycero-3-phosphocholine + H2O = a 1-acyl-sn-glycero-3-phosphocholine + a fatty acid + H(+). Functionally, hydrolysis of phosphatidylcholine with phospholipase A2 (EC 3.1.1.4) and phospholipase A1 (EC 3.1.1.32) activities. This chain is Phospholipase A1 (pldA), found in Klebsiella pneumoniae.